Consider the following 646-residue polypeptide: Macrolide export ATP-binding/permease protein MacB (646 aa).

An ABC transporter domain is found at 7–245 (IRLEDICKTF…EATLQPHEEI (239 aa)). 43 to 50 (GASGSGKS) contacts ATP. Transmembrane regions (helical) follow at residues 274-294 (VLTLLGIIIGVSSVVTMLAIG), 528-548 (VAAISLLVGGIGVMNIMLVSV), 572-592 (FIIEALSVSAIGGAIGVILGL), and 609-629 (FGPVLLAFACAFATGLIFGFL).

This sequence belongs to the ABC transporter superfamily. Macrolide exporter (TC 3.A.1.122) family. As to quaternary structure, homodimer.

The protein localises to the cell inner membrane. Functionally, non-canonical ABC transporter that contains transmembrane domains (TMD), which form a pore in the inner membrane, and an ATP-binding domain (NBD), which is responsible for energy generation. Confers resistance against macrolides. This chain is Macrolide export ATP-binding/permease protein MacB, found in Brucella abortus (strain 2308).